A 481-amino-acid polypeptide reads, in one-letter code: Beta-amyrin 16-beta-monooxygenase (481 aa).

The chain crosses the membrane as a helical span at residues 4–24; sequence LFIIISLVIVILTTIFILSNL. Residue Cys-428 participates in heme binding.

This sequence belongs to the cytochrome P450 family. Heme serves as cofactor. As to expression, highly expressed in roots. Expressed at very low levels in leaves and petals.

It is found in the membrane. It catalyses the reaction beta-amyrin + reduced [NADPH--hemoprotein reductase] + O2 = maniladiol + oxidized [NADPH--hemoprotein reductase] + H2O + H(+). It carries out the reaction oleanolate + reduced [NADPH--hemoprotein reductase] + O2 = cochalate + oxidized [NADPH--hemoprotein reductase] + H2O + H(+). Involved in triterpenoid saponin biosynthesis in roots. Catalyzes the hydroxylation of beta-amyrin at the C-16 beta position to form maniladiol. Is also able to oxidize oleanolat to cochalate. Has weak activity catalyzing the three-step oxidation at C-28 of beta-amyrin to form oleanolate. The sequence is that of Beta-amyrin 16-beta-monooxygenase from Platycodon grandiflorus (Balloon flower).